The chain runs to 2629 residues: Protein DOP1 homolog (2629 aa).

7 disordered regions span residues 561 to 584, 605 to 652, 688 to 710, 1278 to 1340, 1371 to 1395, 1435 to 1471, and 1766 to 1785; these read NKGV…SRLN, SASN…TPRS, AGNV…PQFY, MDES…SSSA, TYRL…QTEH, ISKT…ATDS, and RQDT…SPTR. Composition is skewed to polar residues over residues 605–615 and 636–647; these read SASNQSVGRQS and ASDTGQQSSSDL. The span at 1307–1320 shows a compositional bias: acidic residues; sequence DITDNSDSSDFESD. Positions 1321 to 1333 are enriched in basic and acidic residues; that stretch reads SELRETSLEKEDS. Composition is skewed to polar residues over residues 1381 to 1391 and 1435 to 1450; these read GENSLNSVATD and ISKT…SCSQ.

It belongs to the DOP1 family.

It localises to the golgi apparatus membrane. Functionally, may be involved in protein traffic between late Golgi and early endosomes. This Drosophila pseudoobscura pseudoobscura (Fruit fly) protein is Protein DOP1 homolog.